A 217-amino-acid polypeptide reads, in one-letter code: Putative thymidylate synthase (217 aa).

Residue C139 is part of the active site.

Belongs to the thymidylate synthase family. Archaeal-type ThyA subfamily. In terms of assembly, monomer.

It localises to the cytoplasm. The protein operates within pyrimidine metabolism; dTTP biosynthesis. Its function is as follows. May catalyze the biosynthesis of dTMP using an unknown cosubstrate. This Methanosarcina barkeri (strain Fusaro / DSM 804) protein is Putative thymidylate synthase.